The chain runs to 150 residues: 3-hydroxyacyl-[acyl-carrier-protein] dehydratase FabZ (150 aa).

H54 is an active-site residue.

This sequence belongs to the thioester dehydratase family. FabZ subfamily.

The protein localises to the cytoplasm. The enzyme catalyses a (3R)-hydroxyacyl-[ACP] = a (2E)-enoyl-[ACP] + H2O. Its function is as follows. Involved in unsaturated fatty acids biosynthesis. Catalyzes the dehydration of short chain beta-hydroxyacyl-ACPs and long chain saturated and unsaturated beta-hydroxyacyl-ACPs. The protein is 3-hydroxyacyl-[acyl-carrier-protein] dehydratase FabZ of Pseudoalteromonas translucida (strain TAC 125).